The sequence spans 154 residues: 6,7-dimethyl-8-ribityllumazine synthase (154 aa).

5-amino-6-(D-ribitylamino)uracil contacts are provided by residues Trp-22, Ala-56–Glu-58, and Cys-80–Ile-82. Asp-85–Thr-86 provides a ligand contact to (2S)-2-hydroxy-3-oxobutyl phosphate. Catalysis depends on His-88, which acts as the Proton donor. Asn-113 is a binding site for 5-amino-6-(D-ribitylamino)uracil. A (2S)-2-hydroxy-3-oxobutyl phosphate-binding site is contributed by Arg-127.

Belongs to the DMRL synthase family. Forms an icosahedral capsid composed of 60 subunits, arranged as a dodecamer of pentamers.

The enzyme catalyses (2S)-2-hydroxy-3-oxobutyl phosphate + 5-amino-6-(D-ribitylamino)uracil = 6,7-dimethyl-8-(1-D-ribityl)lumazine + phosphate + 2 H2O + H(+). The protein operates within cofactor biosynthesis; riboflavin biosynthesis; riboflavin from 2-hydroxy-3-oxobutyl phosphate and 5-amino-6-(D-ribitylamino)uracil: step 1/2. Catalyzes the formation of 6,7-dimethyl-8-ribityllumazine by condensation of 5-amino-6-(D-ribitylamino)uracil with 3,4-dihydroxy-2-butanone 4-phosphate. This is the penultimate step in the biosynthesis of riboflavin. This Xanthomonas campestris pv. campestris (strain 8004) protein is 6,7-dimethyl-8-ribityllumazine synthase.